Here is a 422-residue protein sequence, read N- to C-terminus: Replication factor C large subunit (422 aa).

An ATP-binding site is contributed by 63–70 (GPPGVGKT).

The protein belongs to the activator 1 small subunits family. RfcL subfamily. As to quaternary structure, heteromultimer composed of small subunits (RfcS) and large subunits (RfcL).

In terms of biological role, part of the RFC clamp loader complex which loads the PCNA sliding clamp onto DNA. This is Replication factor C large subunit from Pyrobaculum arsenaticum (strain DSM 13514 / JCM 11321 / PZ6).